The sequence spans 274 residues: tRNA pseudouridine synthase A (274 aa).

Residue aspartate 57 is the Nucleophile of the active site. Tyrosine 115 contributes to the substrate binding site.

This sequence belongs to the tRNA pseudouridine synthase TruA family. Homodimer.

The catalysed reaction is uridine(38/39/40) in tRNA = pseudouridine(38/39/40) in tRNA. In terms of biological role, formation of pseudouridine at positions 38, 39 and 40 in the anticodon stem and loop of transfer RNAs. This chain is tRNA pseudouridine synthase A, found in Frankia casuarinae (strain DSM 45818 / CECT 9043 / HFP020203 / CcI3).